The chain runs to 122 residues: Prefoldin subunit 1 (122 aa).

Ala2 is modified (N-acetylalanine).

Belongs to the prefoldin subunit beta family. In terms of assembly, heterohexamer of two PFD-alpha type and four PFD-beta type subunits.

Binds specifically to cytosolic chaperonin (c-CPN) and transfers target proteins to it. Binds to nascent polypeptide chain and promotes folding in an environment in which there are many competing pathways for nonnative proteins. In Mus musculus (Mouse), this protein is Prefoldin subunit 1 (Pfdn1).